Consider the following 211-residue polypeptide: Bacteriorhodopsin (211 aa).

A helical membrane pass occupies residues 1–19; the sequence is IWLWLGTAGMFLGMLYFIA. Topologically, residues 20-33 are cytoplasmic; the sequence is RGWGETDSRRQKFY. A helical transmembrane segment spans residues 34-52; that stretch reads IATILITAIAFVNYLAMAL. Topologically, residues 53 to 68 are extracellular; that stretch reads GFGLTIVEFAGEEHPI. A helical transmembrane segment spans residues 69-86; sequence YWARYSDWLFTTPLLLYD. The Cytoplasmic portion of the chain corresponds to 87 to 97; it reads LGLLAGADRNT. A helical transmembrane segment spans residues 98–117; that stretch reads ITSLVSLDVLMIGTGLVATL. Topologically, residues 118–130 are extracellular; sequence SAGSGVLSAGAER. Residues 131 to 150 form a helical membrane-spanning segment; it reads LVWWGISTAFLLVLLYFLFS. Residues 151–168 lie on the Cytoplasmic side of the membrane; it reads SLSGRVADLPSDTRSTFK. The chain crosses the membrane as a helical span at residues 169-187; sequence TLRNLVTVVWLVYPVWWLI. Residues 188 to 199 lie on the Extracellular side of the membrane; sequence GTEGIGLVGIGI. Residues 200–211 traverse the membrane as a helical segment; the sequence is ETAGFMVIDLTA.

This sequence belongs to the archaeal/bacterial/fungal opsin family.

It is found in the cell membrane. In terms of biological role, light-driven proton pump. The protein is Bacteriorhodopsin (bop) of Halobacterium halobium (strain port).